The following is a 406-amino-acid chain: NAD(P)H-quinone oxidoreductase subunit H, organellar chromatophore (406 aa).

Belongs to the complex I 49 kDa subunit family. In terms of assembly, NDH is composed of at least 16 different subunits, 5 of which are encoded in the nucleus.

The protein resides in the plastid. It localises to the organellar chromatophore thylakoid membrane. The enzyme catalyses a quinone + NADH + H(+) = a quinol + NAD(+). NDH shuttles electrons from NAD(P)H:plastoquinone, via FMN and iron-sulfur (Fe-S) centers, to quinones in the photosynthetic chain and possibly in a chloroplast respiratory chain. The immediate electron acceptor for the enzyme in this species is believed to be plastoquinone. Couples the redox reaction to proton translocation, and thus conserves the redox energy in a proton gradient. The protein is NAD(P)H-quinone oxidoreductase subunit H, organellar chromatophore of Paulinella chromatophora.